Here is a 222-residue protein sequence, read N- to C-terminus: Probable transaldolase (222 aa).

Catalysis depends on Lys91, which acts as the Schiff-base intermediate with substrate.

It belongs to the transaldolase family. Type 3B subfamily.

Its subcellular location is the cytoplasm. The catalysed reaction is D-sedoheptulose 7-phosphate + D-glyceraldehyde 3-phosphate = D-erythrose 4-phosphate + beta-D-fructose 6-phosphate. The protein operates within carbohydrate degradation; pentose phosphate pathway; D-glyceraldehyde 3-phosphate and beta-D-fructose 6-phosphate from D-ribose 5-phosphate and D-xylulose 5-phosphate (non-oxidative stage): step 2/3. In terms of biological role, transaldolase is important for the balance of metabolites in the pentose-phosphate pathway. The chain is Probable transaldolase from Chlorobium luteolum (strain DSM 273 / BCRC 81028 / 2530) (Pelodictyon luteolum).